A 334-amino-acid chain; its full sequence is Putative B3 domain-containing protein At5g66980 (334 aa).

2 consecutive DNA-binding regions (TF-B3) follow at residues 8-105 (LQFF…FAND) and 218-317 (HPHF…VSGR).

It is found in the nucleus. This is Putative B3 domain-containing protein At5g66980 from Arabidopsis thaliana (Mouse-ear cress).